The sequence spans 292 residues: ATP synthase gamma chain (292 aa).

It belongs to the ATPase gamma chain family. As to quaternary structure, F-type ATPases have 2 components, CF(1) - the catalytic core - and CF(0) - the membrane proton channel. CF(1) has five subunits: alpha(3), beta(3), gamma(1), delta(1), epsilon(1). CF(0) has three main subunits: a, b and c.

The protein localises to the cell inner membrane. In terms of biological role, produces ATP from ADP in the presence of a proton gradient across the membrane. The gamma chain is believed to be important in regulating ATPase activity and the flow of protons through the CF(0) complex. The sequence is that of ATP synthase gamma chain from Brucella abortus (strain S19).